The sequence spans 499 residues: NADH-quinone oxidoreductase subunit 14 (499 aa).

14 consecutive transmembrane segments (helical) span residues 9–29 (ILPE…GAYL), 37–57 (TLLW…GLGN), 76–96 (FAKV…ADYM), 104–124 (FEFP…VSAG), 126–146 (LLTL…VAAM), 161–181 (FVLG…VYGF), 196–216 (AGHL…GLSF), 235–255 (PTPV…ALIA), 269–289 (WSQI…IAGI), 301–321 (SSIA…AIGV), 324–344 (MLLY…FILS), 369–389 (ALAM…LGFF), 402–422 (GMGW…FYYL), and 446–466 (YLAL…MFGV).

The protein belongs to the complex I subunit 2 family. NDH-1 is composed of at least 14 different subunits, Nqo1 to Nqo14. The complex has a L-shaped structure, with the hydrophobic arm (subunits Nqo7, Nqo8, Nqo10 to Nqo14) embedded in the inner membrane and the hydrophilic peripheral arm (subunits Nqo1 to Nqo6, Nqo9) protruding into the bacterial cytoplasm. The hydrophilic domain contains all the redox centers.

It localises to the cell inner membrane. It catalyses the reaction a quinone + NADH + 5 H(+)(in) = a quinol + NAD(+) + 4 H(+)(out). In terms of biological role, NDH-1 shuttles electrons from NADH, via FMN and iron-sulfur (Fe-S) centers, to quinones in the respiratory chain. The immediate electron acceptor for the enzyme in this species is believed to be ubiquinone. Couples the redox reaction to proton translocation (for every two electrons transferred, four hydrogen ions are translocated across the cytoplasmic membrane), and thus conserves the redox energy in a proton gradient. In Paracoccus denitrificans, this protein is NADH-quinone oxidoreductase subunit 14.